Reading from the N-terminus, the 691-residue chain is Methionine--tRNA ligase (691 aa).

Residues 15–25 (PYTNGPIHIGH) carry the 'HIGH' region motif. Residues Cys147, Cys150, Cys160, and Cys163 each coordinate Zn(2+). A 'KMSKS' region motif is present at residues 336–340 (KLSTS). Thr339 is a binding site for ATP. In terms of domain architecture, tRNA-binding spans 589-691 (DFTKMDLRVG…DGVKAGTTIN (103 aa)).

Belongs to the class-I aminoacyl-tRNA synthetase family. MetG type 1 subfamily. As to quaternary structure, homodimer. Zn(2+) serves as cofactor.

Its subcellular location is the cytoplasm. It carries out the reaction tRNA(Met) + L-methionine + ATP = L-methionyl-tRNA(Met) + AMP + diphosphate. Its function is as follows. Is required not only for elongation of protein synthesis but also for the initiation of all mRNA translation through initiator tRNA(fMet) aminoacylation. The sequence is that of Methionine--tRNA ligase from Christiangramia forsetii (strain DSM 17595 / CGMCC 1.15422 / KT0803) (Gramella forsetii).